Consider the following 130-residue polypeptide: Glycine cleavage system H protein (130 aa).

The Lipoyl-binding domain occupies 28-110 (TVRIGITSVA…FGEGWLFEVE (83 aa)). Lysine 69 is subject to N6-lipoyllysine.

This sequence belongs to the GcvH family. As to quaternary structure, the glycine cleavage system is composed of four proteins: P, T, L and H. It depends on (R)-lipoate as a cofactor.

Functionally, the glycine cleavage system catalyzes the degradation of glycine. The H protein shuttles the methylamine group of glycine from the P protein to the T protein. This chain is Glycine cleavage system H protein, found in Corynebacterium aurimucosum (strain ATCC 700975 / DSM 44827 / CIP 107346 / CN-1) (Corynebacterium nigricans).